A 339-amino-acid chain; its full sequence is Basic membrane protein A (339 aa).

The first 17 residues, 1-17 (MNKILLLILLESIVFLS), serve as a signal peptide directing secretion. Cys-18 carries N-palmitoyl cysteine lipidation. Cys-18 carries the S-diacylglycerol cysteine lipid modification.

The protein belongs to the BMP lipoprotein family. As to quaternary structure, monomer.

Its subcellular location is the cell inner membrane. In terms of biological role, immunogenic protein. May be part of an ABC-type nucleoside uptake system involved in the purine salvage pathway. The chain is Basic membrane protein A (bmpA) from Borreliella burgdorferi (strain ATCC 35210 / DSM 4680 / CIP 102532 / B31) (Borrelia burgdorferi).